The sequence spans 416 residues: UDP-N-acetylglucosamine 1-carboxyvinyltransferase (416 aa).

22-23 (KN) contacts phosphoenolpyruvate. Arginine 91 contacts UDP-N-acetyl-alpha-D-glucosamine. Catalysis depends on cysteine 115, which acts as the Proton donor. Cysteine 115 carries the post-translational modification 2-(S-cysteinyl)pyruvic acid O-phosphothioketal. UDP-N-acetyl-alpha-D-glucosamine contacts are provided by residues 120 to 124 (RPIDL), aspartate 305, and isoleucine 327.

It belongs to the EPSP synthase family. MurA subfamily.

The protein resides in the cytoplasm. The catalysed reaction is phosphoenolpyruvate + UDP-N-acetyl-alpha-D-glucosamine = UDP-N-acetyl-3-O-(1-carboxyvinyl)-alpha-D-glucosamine + phosphate. Its pathway is cell wall biogenesis; peptidoglycan biosynthesis. Its function is as follows. Cell wall formation. Adds enolpyruvyl to UDP-N-acetylglucosamine. The chain is UDP-N-acetylglucosamine 1-carboxyvinyltransferase from Buchnera aphidicola subsp. Acyrthosiphon pisum (strain Tuc7).